A 272-amino-acid polypeptide reads, in one-letter code: Shikimate dehydrogenase (NADP(+)) (272 aa).

Residues Ser-14–Ser-16 and Thr-61 each bind shikimate. Residue Lys-65 is the Proton acceptor of the active site. Asp-102 contributes to the shikimate binding site. Residues Gly-127–Ala-131, Asn-151–Lys-156, and Leu-215 each bind NADP(+). Tyr-217 contacts shikimate. NADP(+) is bound at residue Gly-239.

It belongs to the shikimate dehydrogenase family. Homodimer.

It carries out the reaction shikimate + NADP(+) = 3-dehydroshikimate + NADPH + H(+). The protein operates within metabolic intermediate biosynthesis; chorismate biosynthesis; chorismate from D-erythrose 4-phosphate and phosphoenolpyruvate: step 4/7. Its function is as follows. Involved in the biosynthesis of the chorismate, which leads to the biosynthesis of aromatic amino acids. Catalyzes the reversible NADPH linked reduction of 3-dehydroshikimate (DHSA) to yield shikimate (SA). This is Shikimate dehydrogenase (NADP(+)) from Coxiella burnetii (strain CbuK_Q154) (Coxiella burnetii (strain Q154)).